The following is a 559-amino-acid chain: uncharacterized protein (559 aa).

11 helical membrane-spanning segments follow: residues 103 to 123 (LAAL…NGLF), 139 to 159 (FGYY…LFYY), 192 to 212 (AGIT…SFPF), 223 to 243 (FFLI…IFLL), 263 to 283 (WSWV…TLAV), 302 to 322 (MLIL…SGVA), 348 to 368 (AAAF…NISD), 387 to 407 (IRRA…PWKI), 413 to 434 (AFLA…IFVA), 466 to 486 (ALIA…MSIN), and 501 to 521 (IGYF…NLVF).

It belongs to the purine-cytosine permease (2.A.39) family.

It is found in the golgi apparatus membrane. This is an uncharacterized protein from Schizosaccharomyces pombe (strain 972 / ATCC 24843) (Fission yeast).